Reading from the N-terminus, the 165-residue chain is Phosphopantetheine adenylyltransferase (165 aa).

S9 is a substrate binding site. ATP contacts are provided by residues 9-10 (SF) and H17. The substrate site is built by K41, L73, and K87. ATP is bound by residues 88–90 (GLR), E98, and 122–128 (YSFLSSS).

This sequence belongs to the bacterial CoaD family. As to quaternary structure, homohexamer. The cofactor is Mg(2+).

The protein localises to the cytoplasm. It catalyses the reaction (R)-4'-phosphopantetheine + ATP + H(+) = 3'-dephospho-CoA + diphosphate. It participates in cofactor biosynthesis; coenzyme A biosynthesis; CoA from (R)-pantothenate: step 4/5. Reversibly transfers an adenylyl group from ATP to 4'-phosphopantetheine, yielding dephospho-CoA (dPCoA) and pyrophosphate. In Acidothermus cellulolyticus (strain ATCC 43068 / DSM 8971 / 11B), this protein is Phosphopantetheine adenylyltransferase.